The primary structure comprises 64 residues: MSKRIPRFLRNIQLPAGPQGPKGDPGPKGDTGAKGADGFGTEAQYNDIISRLEALEQSSGGGTT.

Positions 1–40 are disordered; it reads MSKRIPRFLRNIQLPAGPQGPKGDPGPKGDTGAKGADGFG. The segment covering 15 to 40 has biased composition (low complexity); sequence PAGPQGPKGDPGPKGDTGAKGADGFG.

As to quaternary structure, interacts with the capsid protein gp13.

It is found in the virion. Functionally, decoration protein that binds to each capsid protein hexamer after capsid expansion and forms spikes at the surface of the capsid. Each of the 60 hexamers has three copies of the decoration protein gp12 in its center. The chain is Decoration protein gp12 from Bacillus subtilis (Bacteriophage SPP1).